Reading from the N-terminus, the 201-residue chain is Ran-specific GTPase-activating protein (201 aa).

Residues 1-26 are compositionally biased toward basic and acidic residues; it reads MAAAKDTHEDHDTSTENTDESNHDPQ. A disordered region spans residues 1–35; the sequence is MAAAKDTHEDHDTSTENTDESNHDPQFEPIVSLPE. An N-acetylalanine modification is found at Ala2. Phosphothreonine occurs at positions 13 and 18. A phosphoserine mark is found at Ser21 and Ser60. The RanBD1 domain maps to 26 to 164; it reads QFEPIVSLPE…FEECRKEIEE (139 aa). At Lys150 the chain carries N6-acetyllysine; alternate. Lys150 carries the N6-succinyllysine; alternate modification. The segment at 163-201 is disordered; the sequence is EEREKKAGSGKNDHAEKVAEKLEALSVKEETKEDAEEKQ. Residue Lys183 is modified to N6-acetyllysine. At Ser188 the chain carries Phosphoserine. Residue Lys190 forms a Glycyl lysine isopeptide (Lys-Gly) (interchain with G-Cter in SUMO2) linkage.

Belongs to the RANBP1 family. In terms of assembly, interacts with RAN (via C-terminus of GTP-bound form) but not with GDP-bound RAN. Identified in a complex composed of RAN, RANGAP1 and RANBP1. Identified in a complex that contains TNPO1, RAN and RANBP1. Identified in a complex that contains CSE1L, KPNA2, RAN and RANBP1. Identified in a complex with nucleotide-free RAN and RCC1.

Its function is as follows. Plays a role in RAN-dependent nucleocytoplasmic transport. Alleviates the TNPO1-dependent inhibition of RAN GTPase activity and mediates the dissociation of RAN from proteins involved in transport into the nucleus. Induces a conformation change in the complex formed by XPO1 and RAN that triggers the release of the nuclear export signal of cargo proteins. Promotes the disassembly of the complex formed by RAN and importin beta. Promotes dissociation of RAN from a complex with KPNA2 and CSE1L. Required for normal mitotic spindle assembly and normal progress through mitosis via its effect on RAN. Does not increase the RAN GTPase activity by itself, but increases GTP hydrolysis mediated by RANGAP1. Inhibits RCC1-dependent exchange of RAN-bound GDP by GTP. This Homo sapiens (Human) protein is Ran-specific GTPase-activating protein (RANBP1).